A 67-amino-acid chain; its full sequence is UPF0434 protein Lcho_2556 (67 aa).

It belongs to the UPF0434 family.

This is UPF0434 protein Lcho_2556 from Leptothrix cholodnii (strain ATCC 51168 / LMG 8142 / SP-6) (Leptothrix discophora (strain SP-6)).